The following is a 213-amino-acid chain: Response regulator GacA (213 aa).

The Response regulatory domain maps to 3–119; that stretch reads RVLVVDDHDL…EMVQAIRLVF (117 aa). Position 54 is a 4-aspartylphosphate (aspartate 54). The region spanning 142–207 is the HTH luxR-type domain; that stretch reads SDSPFDALSE…ELTLLAVRHG (66 aa). The segment at residues 166 to 185 is a DNA-binding region (H-T-H motif); that stretch reads VQIISDKLCLSPKTVNTYRY.

Phosphorylated by GacS.

In terms of biological role, member of the two-component regulatory system GacA/GacS which controls the expression of secondary metabolites and extracellular products. Acts (probably primarily) by activating expression of CsrA1 and CsrA2 antagonist small RNAs (sRNA) RsmX, RsmY and RsmZ which bind to and prevent translation repression by CsrA1 and CsrA2. Involved in the regulation of secondary metabolism and in the synthesis of the antifungal factors cyanide, 2,4-diacetylphloroglucinol and pyoluteorin. Involved in synthesis of the autoinducing signal (unrelated to N-acylhomoserine lactones, induces the Gac/Csr cascade). Exercises positive post-transcriptional control over the hcnABC and aprA genes; acts upstream of CsrA2 (rsmA). Controls expression of csrA1 (rsmE) and csrA2. This Pseudomonas protegens (strain DSM 19095 / LMG 27888 / CFBP 6595 / CHA0) protein is Response regulator GacA.